Consider the following 468-residue polypeptide: MLLCWIVSLLLATVGGKEVCYGHLGCFSNDKPWAGMLQRPLKIFPWSPEDIDTRFLLYTNENPNNYQKISATEPDTIKFSNFQLDRKTRFIVHGFIDKGEDGWLLDMCKKMFQVEKVNCICVDWRRGSRTEYTQASYNTRVVGAEIAFLVQVLSTEMGYSPENVHLIGHSLGAHVVGEAGRRLEGHVGRITGLDPAEPCFQGLPEEVRLDPSDAMFVDVIHTDSAPIIPYLGFGMSQKVGHLDFFPNGGKEMPGCQKNILSTIVDINGIWEGTQNFVACNHLRSYKYYASSILNPDGFLGYPCSSYEKFQQNDCFPCPEEGCPKMGHYADQFEGKTATVEQTVYLNTGDSGNFTRWRYKVSVTLSGAKKLSGYILVALYGNNGNSKQYEIFKGSLKPEARHVRDIDVDINVGEIQKVKFLWNNKVINLFRPTLGASQITVQSGVDGKEYNFCSSDTVREDVLQSLYPC.

The first 16 residues, 1-16, serve as a signal peptide directing secretion; the sequence is MLLCWIVSLLLATVGG. A disulfide bond links Cys20 and Cys26. The interval 92-104 is required for galactolipase activity; it reads VHGFIDKGEDGWL. Cys108 and Cys119 are oxidised to a cystine. The Nucleophile role is filled by Ser170. Catalysis depends on Asp194, which acts as the Charge relay system. Ca(2+) is bound by residues Glu205, Arg208, Asp210, and Asp213. Cys255 and Cys279 are oxidised to a cystine. Residues 256 to 278 are required for galactolipase activity; sequence QKNILSTIVDINGIWEGTQNFVA. His281 acts as the Charge relay system in catalysis. 2 disulfide bridges follow: Cys303–Cys314 and Cys317–Cys322. Residues Asn352 and Asn427 are each glycosylated (N-linked (GlcNAc...) asparagine). In terms of domain architecture, PLAT spans 356-468; it reads WRYKVSVTLS…EDVLQSLYPC (113 aa). A disulfide bond links Cys452 and Cys468.

It belongs to the AB hydrolase superfamily. Lipase family. In terms of tissue distribution, expressed in pancreatic acinar cells (at protein level).

It is found in the secreted. Its subcellular location is the zymogen granule membrane. It localises to the cell projection. The protein resides in the neuron projection. The enzyme catalyses a triacylglycerol + H2O = a diacylglycerol + a fatty acid + H(+). It carries out the reaction a 1,2-diacyl-3-O-(beta-D-galactosyl)-sn-glycerol + 2 H2O = 3-beta-D-galactosyl-sn-glycerol + 2 a fatty acid + 2 H(+). It catalyses the reaction 1,2,3-tri-(9Z-octadecenoyl)-glycerol + H2O = di-(9Z)-octadecenoylglycerol + (9Z)-octadecenoate + H(+). The catalysed reaction is di-(9Z)-octadecenoylglycerol + H2O = (9Z-octadecenoyl)-glycerol + (9Z)-octadecenoate + H(+). The enzyme catalyses (9Z-octadecenoyl)-glycerol + H2O = glycerol + (9Z)-octadecenoate + H(+). It carries out the reaction 1-(9Z-octadecenoyl)-glycerol + H2O = glycerol + (9Z)-octadecenoate + H(+). It catalyses the reaction 1,2,3-tripropanoylglycerol + H2O = dipropanoylglycerol + propanoate + H(+). The catalysed reaction is 1,2,3-tributanoylglycerol + H2O = dibutanoylglycerol + butanoate + H(+). The enzyme catalyses 1,2,3-trioctanoylglycerol + H2O = dioctanoylglycerol + octanoate + H(+). It carries out the reaction 1,2-didecanoylglycerol + H2O = decanoylglycerol + decanoate + H(+). It catalyses the reaction long chain 1,2-diacyl-3-O-beta-D-galactosyl-sn-glycerol + H2O = long chain acyl-3-O-beta-D-galactosyl-sn-glycerol + a fatty acid + H(+). The catalysed reaction is 1,2-dioctanoyl-3-O-beta-D-galactosyl-sn-glycerol + H2O = octanoyl-3-(beta-D-galactosyl)-sn-glycerol + octanoate + H(+). The enzyme catalyses 1,2-didodecanoyl-3-beta-D-galactosyl-sn-glycerol + H2O = dodecanoyl-3-beta-D-galactosyl-sn-glycerol + dodecanoate + H(+). It carries out the reaction 1-beta-D-galactosyl-2,3-didodecanoyl-sn-glycerol + H2O = 1-beta-D-galactosyl-dodecanoyl-sn-glycerol + dodecanoate + H(+). It catalyses the reaction a 1,2-diacyl-3-O-[alpha-D-galactosyl-(1-&gt;6)-beta-D-galactosyl]-sn-glycerol + H2O = acyl-3-O-[alpha-D-galactosyl-(1-&gt;6)-beta-D-galactosyl]-sn-glycerol + a fatty acid + H(+). The catalysed reaction is long chain 1,2-diacyl-3-O-[alpha-D-galactosyl-(1-&gt;6)-beta-D-galactosyl]-sn-glycerol + H2O = long chain acyl-3-O-[alpha-D-galactosyl-(1-&gt;6)-beta-D-galactosyl]-sn-glycerol + a fatty acid + H(+). The enzyme catalyses 1,2-dioctanoyl-3-O-[alpha-D-galactosyl-(1-&gt;6)-beta-D-galactosyl]-sn-glycerol + H2O = octanoyl-3-O-[alpha-D-galactosyl-(1-&gt;6)-beta-D-galactosyl]-sn-glycerol + octanoate + H(+). It carries out the reaction 1,2-didodecanoyl-3-O-[alpha-D-galactosyl-(1-&gt;6)-beta-D-galactosyl]-sn-glycerol + H2O = dodecanoyl-3-O-[alpha-D-galactosyl-(1-&gt;6)-beta-D-galactosyl]-sn-glycerol + dodecanoate + H(+). It catalyses the reaction a 1,2-diacyl-sn-glycero-3-phosphocholine + H2O = a monoacyl-sn-glycero-3-phosphocholine + a fatty acid + H(+). It participates in glycerolipid metabolism; triacylglycerol degradation. The protein operates within glycolipid metabolism. Its activity is regulated as follows. CLPS stimulates triacylglycerol lipase activity. Triacylglycerol lipase activity is not inhibited by increasing bile salt concentration. Lipase that primarily hydrolyzes triglycerides and galactosylglycerides. In neonates, may play a major role in pancreatic digestion of dietary fats such as milk fat globules enriched in long-chain triglycerides. Hydrolyzes short-, medium- and long-chain fatty acyls in triglycerides without apparent positional specificity. Can completely deacylate triacylglycerols. When the liver matures and bile salt synthesis increases, likely functions mainly as a galactolipase and monoacylglycerol lipase. Hydrolyzes monogalactosyldiglycerols (MGDG) and digalactosyldiacylglycerols (DGDG) present in a plant-based diet, releasing long-chain polyunsaturated fatty acids. Hydrolyzes medium- and long-chain fatty acyls in galactolipids. May act together with LIPF to hydrolyze partially digested triglycerides. Hydrolyzes long-chain monoglycerides with high efficiency. In cytotoxic T cells, contributes to perforin-dependent cell lysis, but is unlikely to mediate direct cytotoxicity. Also has low phospholipase activity. In neurons, required for the localization of the phospholipid 1-oleoyl-2-palmitoyl-PC (OPPC) to neurite tips through acyl chain remodeling of membrane phospholipids. The resulting OPPC-rich lipid membrane domain recruits the t-SNARE protein STX4 by selectively interacting with the STX4 transmembrane domain and this promotes surface expression of the dopamine transporter SLC6A3/DAT at neurite tips by facilitating fusion of SLC6A3-containing transport vesicles with the plasma membrane. The polypeptide is Pancreatic lipase-related protein 2 (Rattus norvegicus (Rat)).